The sequence spans 140 residues: TPT1-like protein (140 aa).

A TCTP domain is found at 6–140 (MITYWDLISH…LANFKNYQKT (135 aa)).

Belongs to the TCTP family.

The sequence is that of TPT1-like protein from Homo sapiens (Human).